The primary structure comprises 242 residues: Biosynthetic peptidoglycan transglycosylase (242 aa).

Residues 19–39 (ILVVLAVFWGGGIALFSVVPV) traverse the membrane as a helical segment.

The protein belongs to the glycosyltransferase 51 family.

The protein localises to the cell inner membrane. The enzyme catalyses [GlcNAc-(1-&gt;4)-Mur2Ac(oyl-L-Ala-gamma-D-Glu-L-Lys-D-Ala-D-Ala)](n)-di-trans,octa-cis-undecaprenyl diphosphate + beta-D-GlcNAc-(1-&gt;4)-Mur2Ac(oyl-L-Ala-gamma-D-Glu-L-Lys-D-Ala-D-Ala)-di-trans,octa-cis-undecaprenyl diphosphate = [GlcNAc-(1-&gt;4)-Mur2Ac(oyl-L-Ala-gamma-D-Glu-L-Lys-D-Ala-D-Ala)](n+1)-di-trans,octa-cis-undecaprenyl diphosphate + di-trans,octa-cis-undecaprenyl diphosphate + H(+). It functions in the pathway cell wall biogenesis; peptidoglycan biosynthesis. Its function is as follows. Peptidoglycan polymerase that catalyzes glycan chain elongation from lipid-linked precursors. The sequence is that of Biosynthetic peptidoglycan transglycosylase from Citrobacter koseri (strain ATCC BAA-895 / CDC 4225-83 / SGSC4696).